A 124-amino-acid chain; its full sequence is Small ribosomal subunit protein uS13 (124 aa).

The segment at Lys94–Arg124 is disordered.

It belongs to the universal ribosomal protein uS13 family. Part of the 30S ribosomal subunit. Forms a loose heterodimer with protein S19. Forms two bridges to the 50S subunit in the 70S ribosome.

Functionally, located at the top of the head of the 30S subunit, it contacts several helices of the 16S rRNA. In the 70S ribosome it contacts the 23S rRNA (bridge B1a) and protein L5 of the 50S subunit (bridge B1b), connecting the 2 subunits; these bridges are implicated in subunit movement. Contacts the tRNAs in the A and P-sites. The protein is Small ribosomal subunit protein uS13 of Pseudarthrobacter chlorophenolicus (strain ATCC 700700 / DSM 12829 / CIP 107037 / JCM 12360 / KCTC 9906 / NCIMB 13794 / A6) (Arthrobacter chlorophenolicus).